Consider the following 385-residue polypeptide: uncharacterized protein (385 aa).

Belongs to the mimivirus L17x/L18x family.

This is an uncharacterized protein from Acanthamoeba polyphaga mimivirus (APMV).